A 464-amino-acid chain; its full sequence is Sugar transporter ERD6-like 1 (464 aa).

12 consecutive transmembrane segments (helical) span residues 23-43, 72-92, 95-115, 125-145, 156-176, 180-200, 263-283, 298-318, 326-346, 359-379, 399-419, and 424-444; these read ITCGLLLSTSVAVTGSFVYGC, VMTLGGMITAAFSGKIAAVIG, QTMWIADVFCIFGWLAVAFAH, GFLGFGVGLISYVVPVYIAEI, FSNQLLQSFGISLMFFTGNFF, TLALLSAIPCGIQMICLFFIP, LIIGLGLMLLQQFCGSSAISA, IGTSILAVILVPQSIIVMFAV, LLMSSSIGLCICSFLIGLSYY, PILIVGLVGYVLSFGIGLGGL, LVTVSNWFFSWIIIFSFNFMM, and FGTYFIFAGVSLMSFVFVWTL.

Belongs to the major facilitator superfamily. Sugar transporter (TC 2.A.1.1) family.

The protein resides in the membrane. Functionally, sugar transporter. The polypeptide is Sugar transporter ERD6-like 1 (SUGTL4) (Arabidopsis thaliana (Mouse-ear cress)).